A 439-amino-acid chain; its full sequence is MLEQVRIQKMVNGGYGLAHLSNGKVVLVEGAYPGEEVLIKTYREKRDFSFGKVVSLLKESEDRIKPPCRYFGRCGGCHWMDVKYETQLRYKKEVLIDLFERSNLKVEVEDVEPSDLVFHYRTKMEFHFQGRKLGLKKRNSDFVIDIKDCEVAPEGTGEILNTVKEAVQVLNVPVYNWETRKGVLKHLVIRYAFSTDQFMVIFVTKTESFPWGRDLVRAVLKRFPKIHSIIHVMNSKDSVVLRGPYKTLYGEGVIVEEFDWERFQIPPTAFFQSNYSITSKLIDHVYREQALQGNEVVLDLYAGIGTFSVRTSFSAARVISVESSRVAVKAGKANANINSRKNIEYVEQDVLDFLKNYSGRADRIILDPPRSGAGPEVMKEIARLSPERIVYVSCDPSTLVRDLKVLVENGYSIVRVKPFDMFPQTYHVETAVTLVKGDR.

A TRAM domain is found at 1–55 (MLEQVRIQKMVNGGYGLAHLSNGKVVLVEGAYPGEEVLIKTYREKRDFSFGKVVS). Residues C68, C74, C77, and C149 each coordinate [4Fe-4S] cluster. S-adenosyl-L-methionine contacts are provided by Q272, Y301, E322, and D367. The active-site Nucleophile is the C394.

Belongs to the class I-like SAM-binding methyltransferase superfamily. RNA M5U methyltransferase family.

This is an uncharacterized protein from Thermotoga maritima (strain ATCC 43589 / DSM 3109 / JCM 10099 / NBRC 100826 / MSB8).